Here is a 148-residue protein sequence, read N- to C-terminus: Large ribosomal subunit protein uL15 (148 aa).

Positions 1–47 are disordered; that stretch reads MAFSLENLRPAPGSRPKSKRVGRGSSSGKGKTSSRGHKGQGRGTGKV.

This sequence belongs to the universal ribosomal protein uL15 family. In terms of assembly, part of the 50S ribosomal subunit.

Functionally, binds to the 23S rRNA. The polypeptide is Large ribosomal subunit protein uL15 (Kosmotoga olearia (strain ATCC BAA-1733 / DSM 21960 / TBF 19.5.1)).